A 140-amino-acid polypeptide reads, in one-letter code: Translation initiation factor 2 subunit beta (140 aa).

The protein belongs to the eIF-2-beta/eIF-5 family. Heterotrimer composed of an alpha, a beta and a gamma chain.

Its function is as follows. eIF-2 functions in the early steps of protein synthesis by forming a ternary complex with GTP and initiator tRNA. This chain is Translation initiation factor 2 subunit beta, found in Pyrococcus furiosus (strain ATCC 43587 / DSM 3638 / JCM 8422 / Vc1).